We begin with the raw amino-acid sequence, 319 residues long: ATP-dependent 6-phosphofructokinase (319 aa).

Gly-11 lines the ATP pocket. Residue 21-25 (RAVVR) participates in ADP binding. ATP-binding positions include 72-73 (RC) and 102-105 (GDGS). Asp-103 lines the Mg(2+) pocket. 125 to 127 (TID) contributes to the substrate binding site. The active-site Proton acceptor is the Asp-127. Arg-154 lines the ADP pocket. Substrate contacts are provided by residues Arg-162 and 169-171 (MGR). ADP-binding positions include 185-187 (GAE), Arg-211, and 213-215 (KLH). Residues Glu-222, Arg-243, and 249–252 (HIQR) contribute to the substrate site.

Belongs to the phosphofructokinase type A (PFKA) family. ATP-dependent PFK group I subfamily. Prokaryotic clade 'B1' sub-subfamily. As to quaternary structure, homotetramer. Requires Mg(2+) as cofactor.

Its subcellular location is the cytoplasm. The catalysed reaction is beta-D-fructose 6-phosphate + ATP = beta-D-fructose 1,6-bisphosphate + ADP + H(+). Its pathway is carbohydrate degradation; glycolysis; D-glyceraldehyde 3-phosphate and glycerone phosphate from D-glucose: step 3/4. Allosterically activated by ADP and other diphosphonucleosides, and allosterically inhibited by phosphoenolpyruvate. In terms of biological role, catalyzes the phosphorylation of D-fructose 6-phosphate to fructose 1,6-bisphosphate by ATP, the first committing step of glycolysis. This Alkaliphilus metalliredigens (strain QYMF) protein is ATP-dependent 6-phosphofructokinase.